The chain runs to 223 residues: MAGKPVLHYFNARGRMECIRWLLAAAGVEFEEKFIQSPEDLEKLKKDGNLMFDQVPMVEIDGMKLAQTRAILNYIATKYDLYGKDMKERALIDMYSEGILDLTEMIGQLVLCPPDQREAKTALAKDRTKNRYLPAFEKVLKSHGQDYLVGNRLTRVDIHLLEVLLYVEEFDASLLTPFPLLKAFKSRISSLPNVKKFLQPGSQRKPPMDAKQIQEARKAFKIQ.

Methionine 1 is modified (N-acetylmethionine). Alanine 2 bears the N-acetylalanine; in Glutathione S-transferase A1, N-terminally processed mark. In terms of domain architecture, GST N-terminal spans 3–83 (GKPVLHYFNA…YIATKYDLYG (81 aa)). Lysine 4 bears the N6-succinyllysine mark. Glutathione is bound by residues tyrosine 9, lysine 45, 54 to 55 (QV), and 67 to 68 (QT). The 124-residue stretch at 85–208 (DMKERALIDM…QPGSQRKPPM (124 aa)) folds into the GST C-terminal domain.

This sequence belongs to the GST superfamily. Alpha family. In terms of assembly, homodimer. In terms of tissue distribution, expressed in the liver, skin and kidney.

The enzyme catalyses RX + glutathione = an S-substituted glutathione + a halide anion + H(+). It carries out the reaction prostaglandin A2 + glutathione = prostaglandin A2-S-(R)-glutathione. The catalysed reaction is prostaglandin J2 + glutathione = prostaglandin J2-S-(R)-glutathione. It catalyses the reaction (13S)-hydroperoxy-(9Z,11E)-octadecadienoate + 2 glutathione = (13S)-hydroxy-(9Z,11E)-octadecadienoate + glutathione disulfide + H2O. The enzyme catalyses androst-5-ene-3,17-dione = androst-4-ene-3,17-dione. In terms of biological role, glutathione S-transferase that catalyzes the nucleophilic attack of the sulfur atom of glutathione on the electrophilic groups of a wide range of exogenous and endogenous compounds. Involved in the formation of glutathione conjugates of both prostaglandin A2 (PGA2) and prostaglandin J2 (PGJ2). It also catalyzes the isomerization of D5-androstene-3,17-dione (AD) into D4-androstene-3,17-dione and may therefore play an important role in hormone biosynthesis. Through its glutathione-dependent peroxidase activity toward the fatty acid hydroperoxide (13S)-hydroperoxy-(9Z,11E)-octadecadienoate/13-HPODE it is also involved in the metabolism of oxidized linoleic acid. In Mus musculus (Mouse), this protein is Glutathione S-transferase A1 (Gsta1).